The following is a 203-amino-acid chain: Pyridoxal 5'-phosphate synthase subunit PdxT (203 aa).

51 to 53 contributes to the L-glutamine binding site; sequence GES. Catalysis depends on Cys-83, which acts as the Nucleophile. Residues Arg-110 and 137-138 contribute to the L-glutamine site; that span reads IR. Catalysis depends on charge relay system residues His-172 and Glu-174.

The protein belongs to the glutaminase PdxT/SNO family. In the presence of PdxS, forms a dodecamer of heterodimers. Only shows activity in the heterodimer.

It catalyses the reaction aldehydo-D-ribose 5-phosphate + D-glyceraldehyde 3-phosphate + L-glutamine = pyridoxal 5'-phosphate + L-glutamate + phosphate + 3 H2O + H(+). The enzyme catalyses L-glutamine + H2O = L-glutamate + NH4(+). Its pathway is cofactor biosynthesis; pyridoxal 5'-phosphate biosynthesis. In terms of biological role, catalyzes the hydrolysis of glutamine to glutamate and ammonia as part of the biosynthesis of pyridoxal 5'-phosphate. The resulting ammonia molecule is channeled to the active site of PdxS. This chain is Pyridoxal 5'-phosphate synthase subunit PdxT, found in Thermoplasma acidophilum (strain ATCC 25905 / DSM 1728 / JCM 9062 / NBRC 15155 / AMRC-C165).